The chain runs to 276 residues: Radial spoke head protein 9 homolog (276 aa).

Belongs to the flagellar radial spoke RSP9 family. Component of the axonemal radial spoke 1 (RS1) and 2 (RS2) complexes, at least composed of spoke head proteins RSPH1, RSPH3, RSPH9 and the cilia-specific component RSPH4A or sperm-specific component RSPH6A, spoke stalk proteins RSPH14, DNAJB13, DYDC1, ROPN1L and NME5, and the RS1 complex-specific anchor protein IQUB. Interacts with IQUB. Interacts with RSPH3B. Interacts with RSPH4A. Interacts with RSPH6A. Interacts with CFAP61. Interacts with LRRC23.

Its subcellular location is the cytoplasm. It localises to the cytoskeleton. The protein localises to the cilium axoneme. The protein resides in the flagellum axoneme. It is found in the cell projection. Its subcellular location is the kinocilium. Functions as part of axonemal radial spoke complexes that play an important part in the motility of sperm and cilia. Essential for both the radial spoke head assembly and the central pair microtubule stability in ependymal motile cilia. Required for motility of olfactory and neural cilia and for the structural integrity of ciliary axonemes in both 9+0 and 9+2 motile cilia. This Bos taurus (Bovine) protein is Radial spoke head protein 9 homolog (RSPH9).